Consider the following 363-residue polypeptide: Ribosomal RNA large subunit methyltransferase M (363 aa).

S-adenosyl-L-methionine-binding positions include Ser190, 223–226 (CPGG), Asp242, Asp262, and Asp280. Catalysis depends on Lys309, which acts as the Proton acceptor.

It belongs to the class I-like SAM-binding methyltransferase superfamily. RNA methyltransferase RlmE family. RlmM subfamily. In terms of assembly, monomer.

It is found in the cytoplasm. The enzyme catalyses cytidine(2498) in 23S rRNA + S-adenosyl-L-methionine = 2'-O-methylcytidine(2498) in 23S rRNA + S-adenosyl-L-homocysteine + H(+). Its function is as follows. Catalyzes the 2'-O-methylation at nucleotide C2498 in 23S rRNA. This Actinobacillus pleuropneumoniae serotype 5b (strain L20) protein is Ribosomal RNA large subunit methyltransferase M.